Here is a 378-residue protein sequence, read N- to C-terminus: Erythronate-4-phosphate dehydrogenase (378 aa).

Residues Ser-45 and Thr-66 each coordinate substrate. Asp-146 and Thr-175 together coordinate NAD(+). Arg-208 is a catalytic residue. Asp-232 lines the NAD(+) pocket. Glu-237 is a catalytic residue. Residue His-254 is the Proton donor of the active site. NAD(+) is bound at residue Gly-257. Tyr-258 serves as a coordination point for substrate.

This sequence belongs to the D-isomer specific 2-hydroxyacid dehydrogenase family. PdxB subfamily. As to quaternary structure, homodimer.

It is found in the cytoplasm. The enzyme catalyses 4-phospho-D-erythronate + NAD(+) = (R)-3-hydroxy-2-oxo-4-phosphooxybutanoate + NADH + H(+). It participates in cofactor biosynthesis; pyridoxine 5'-phosphate biosynthesis; pyridoxine 5'-phosphate from D-erythrose 4-phosphate: step 2/5. Functionally, catalyzes the oxidation of erythronate-4-phosphate to 3-hydroxy-2-oxo-4-phosphonooxybutanoate. In Pectobacterium carotovorum subsp. carotovorum (strain PC1), this protein is Erythronate-4-phosphate dehydrogenase.